The sequence spans 289 residues: Golgi to ER traffic protein 2 (289 aa).

The segment covering 1-10 has biased composition (basic and acidic residues); sequence MSEVSEAEKR. Residues 1–68 form a disordered region; the sequence is MSEVSEAEKR…LQRGSNSGQS (68 aa). The Cytoplasmic segment spans residues 1 to 153; that stretch reads MSEVSEAEKR…VGVHQFQVRQ (153 aa). Basic residues predominate over residues 11 to 21; that stretch reads RILREKRKQKF. Over residues 33–68 the composition is skewed to polar residues; the sequence is ITTQQPGGASGDSTVTSAEISDNEGSLQRGSNSGQS. Residues 154–173 form a helical membrane-spanning segment; that stretch reads LKAYMLLLRWAILLPFIYYV. Over 174 to 196 the chain is Lumenal; the sequence is MHPGTAHWLHTSRFLHFVMEPRN. A helical membrane pass occupies residues 197-216; that stretch reads FFMVFTTFEVASISIYYQVL. At 217 to 263 the chain is on the cytoplasmic side; sequence LTLERTNKVNSLSYSSKLVTWAGLVPDGMLPIDNLQGKVVVALHYWD. The chain crosses the membrane as a helical span at residues 264 to 284; the sequence is ILSMYLTDLSLCLVAAGLMKY. The Lumenal portion of the chain corresponds to 285–289; the sequence is YHAAP.

This sequence belongs to the GET2 family. Component of the Golgi to ER traffic (GET) complex, which is composed of GET1, GET2 and GET3. Within the complex, GET1 and GET2 form a heterotetramer which is stabilized by phosphatidylinositol binding and which binds to the GET3 homodimer.

Its subcellular location is the endoplasmic reticulum membrane. It is found in the golgi apparatus membrane. Its function is as follows. Required for the post-translational delivery of tail-anchored (TA) proteins to the endoplasmic reticulum. Together with GET1, acts as a membrane receptor for soluble GET3, which recognizes and selectively binds the transmembrane domain of TA proteins in the cytosol. The GET complex cooperates with the HDEL receptor ERD2 to mediate the ATP-dependent retrieval of resident ER proteins that contain a C-terminal H-D-E-L retention signal from the Golgi to the ER. This chain is Golgi to ER traffic protein 2, found in Eremothecium gossypii (strain ATCC 10895 / CBS 109.51 / FGSC 9923 / NRRL Y-1056) (Yeast).